Here is a 102-residue protein sequence, read N- to C-terminus: Small ribosomal subunit protein uS10 (102 aa).

This sequence belongs to the universal ribosomal protein uS10 family. As to quaternary structure, part of the 30S ribosomal subunit.

Involved in the binding of tRNA to the ribosomes. This is Small ribosomal subunit protein uS10 from Streptococcus pyogenes serotype M12 (strain MGAS2096).